Reading from the N-terminus, the 374-residue chain is Putative L-lysine 2,3-aminomutase aq_1632 (374 aa).

A Radical SAM core domain is found at 86–314 (HKYPDTALLL…ARVRYVMSHE (229 aa)). Cys100, Cys104, and Cys107 together coordinate [4Fe-4S] cluster. Lys317 is modified (N6-(pyridoxal phosphate)lysine).

The protein belongs to the radical SAM superfamily. KamA family. It depends on [4Fe-4S] cluster as a cofactor. The cofactor is pyridoxal 5'-phosphate.

The chain is Putative L-lysine 2,3-aminomutase aq_1632 from Aquifex aeolicus (strain VF5).